An 87-amino-acid chain; its full sequence is MGSRLPPAALTLKQFLVRQQVLGLYRKILRSVRQIPDAADQRYMQEWAREEFRRNKGATEEIAIRMMITHGQRQLQELERALHLAKS.

The transit peptide at 1-19 directs the protein to the mitochondrion; the sequence is MGSRLPPAALTLKQFLVRQ.

The protein belongs to the complex I LYR family.

The protein localises to the mitochondrion. Involved in efficient integration of the N-module into mitochondrial respiratory chain complex I. This chain is LYR motif-containing protein 2 (lyrm2), found in Xenopus tropicalis (Western clawed frog).